Reading from the N-terminus, the 709-residue chain is Polyribonucleotide nucleotidyltransferase (709 aa).

2 residues coordinate Mg(2+): aspartate 482 and aspartate 488. Residues 549–608 (PRIITMSIDPDKIREVIGPGGKVINKIIAETGVKIDIEDDGRIFIAATDTEAANKAVRII) enclose the KH domain. Residues 618–686 (GKVYTGKVTR…KQGRINLSRK (69 aa)) enclose the S1 motif domain.

The protein belongs to the polyribonucleotide nucleotidyltransferase family. The cofactor is Mg(2+).

It is found in the cytoplasm. It carries out the reaction RNA(n+1) + phosphate = RNA(n) + a ribonucleoside 5'-diphosphate. Functionally, involved in mRNA degradation. Catalyzes the phosphorolysis of single-stranded polyribonucleotides processively in the 3'- to 5'-direction. The polypeptide is Polyribonucleotide nucleotidyltransferase (Heliobacterium modesticaldum (strain ATCC 51547 / Ice1)).